Here is a 269-residue protein sequence, read N- to C-terminus: Prespore protein Dd31 (269 aa).

Over residues 1-17 the composition is skewed to polar residues; the sequence is MEHNNNPGTPQMSSEFP. A disordered region spans residues 1-35; it reads MEHNNNPGTPQMSSEFPASTTQTSSSAAAYDNSSH. The span at 18–29 shows a compositional bias: low complexity; that stretch reads ASTTQTSSSAAA. A run of 4 helical transmembrane segments spans residues 111–131, 139–159, 177–197, and 225–245; these read FGIFVFLWEAAALVYNWVVSI, VDNFFLALFYMIVGVPTLYFL, YAYLMALLGVVLFNIIFFVGF, and VSLFFWFVGVFLTIALFIMYL.

Belongs to the SCAMP family.

The protein resides in the membrane. The protein localises to the spore coat. This is Prespore protein Dd31 (spiA) from Dictyostelium discoideum (Social amoeba).